The sequence spans 119 residues: Large ribosomal subunit protein bL20 (119 aa).

The protein belongs to the bacterial ribosomal protein bL20 family.

Its function is as follows. Binds directly to 23S ribosomal RNA and is necessary for the in vitro assembly process of the 50S ribosomal subunit. It is not involved in the protein synthesizing functions of that subunit. This chain is Large ribosomal subunit protein bL20, found in Ruthia magnifica subsp. Calyptogena magnifica.